The primary structure comprises 346 residues: Phosphoribosylformylglycinamidine cyclo-ligase (346 aa).

This sequence belongs to the AIR synthase family.

The protein resides in the cytoplasm. It catalyses the reaction 2-formamido-N(1)-(5-O-phospho-beta-D-ribosyl)acetamidine + ATP = 5-amino-1-(5-phospho-beta-D-ribosyl)imidazole + ADP + phosphate + H(+). It participates in purine metabolism; IMP biosynthesis via de novo pathway; 5-amino-1-(5-phospho-D-ribosyl)imidazole from N(2)-formyl-N(1)-(5-phospho-D-ribosyl)glycinamide: step 2/2. The protein is Phosphoribosylformylglycinamidine cyclo-ligase of Geobacillus kaustophilus (strain HTA426).